The sequence spans 359 residues: 5-amino-6-(D-ribitylamino)uracil--L-tyrosine 4-hydroxyphenyl transferase (359 aa).

The region spanning 45–282 is the Radical SAM core domain; that stretch reads VTYVVNANIN…TYAVSRIFFK (238 aa). The [4Fe-4S] cluster site is built by cysteine 59, cysteine 63, and cysteine 66.

It belongs to the radical SAM superfamily. CofH family. Consists of two subunits, CofG and CofH. Requires [4Fe-4S] cluster as cofactor.

The enzyme catalyses 5-amino-6-(D-ribitylamino)uracil + L-tyrosine + S-adenosyl-L-methionine = 5-amino-5-(4-hydroxybenzyl)-6-(D-ribitylimino)-5,6-dihydrouracil + 2-iminoacetate + 5'-deoxyadenosine + L-methionine + H(+). It participates in cofactor biosynthesis; coenzyme F0 biosynthesis. Its function is as follows. Catalyzes the radical-mediated synthesis of 5-amino-5-(4-hydroxybenzyl)-6-(D-ribitylimino)-5,6-dihydrouracil from 5-amino-6-(D-ribitylamino)uracil and L-tyrosine. The chain is 5-amino-6-(D-ribitylamino)uracil--L-tyrosine 4-hydroxyphenyl transferase from Methanococcus maripaludis (strain C6 / ATCC BAA-1332).